The following is a 442-amino-acid chain: Adenylosuccinate synthetase (442 aa).

Residues 25–31, 53–55, and lysine 62 contribute to the GTP site; these read GDEGKGK and GHT. Aspartate 26 serves as the catalytic Proton acceptor. Mg(2+)-binding residues include aspartate 26 and glycine 53. Residues 26–29 and 51–54 each bind IMP; these read DEGK and NAGH. The active-site Proton donor is the histidine 54. Positions 141, 155, 232, and 247 each coordinate IMP. Threonine 307 is a binding site for GTP. 307–313 contributes to the substrate binding site; it reads TTTKRPR. IMP is bound at residue arginine 311. GTP contacts are provided by residues arginine 313, 339–341, and 425–427; these read KLD and GVG.

Belongs to the adenylosuccinate synthetase family. In terms of assembly, homodimer. Mg(2+) is required as a cofactor.

It is found in the cytoplasm. It carries out the reaction IMP + L-aspartate + GTP = N(6)-(1,2-dicarboxyethyl)-AMP + GDP + phosphate + 2 H(+). It participates in purine metabolism; AMP biosynthesis via de novo pathway; AMP from IMP: step 1/2. Inhibited by hadacidin. Activated by fructose 1,6-bisphosphate. In terms of biological role, plays an important role in the salvage pathway for purine nucleotide biosynthesis. Catalyzes the first committed step in the biosynthesis of AMP from IMP. The chain is Adenylosuccinate synthetase (Adss) from Plasmodium falciparum.